Consider the following 112-residue polypeptide: DNA-directed RNA polymerases I and III subunit RPAC2 (112 aa).

It belongs to the archaeal Rpo11/eukaryotic RPB11/RPC19 RNA polymerase subunit family. In terms of assembly, component of the RNA polymerase I (Pol I) and RNA polymerase III (Pol III) complexes consisting of at least 13 and 17 subunits, respectively.

The protein resides in the nucleus. DNA-dependent RNA polymerase catalyzes the transcription of DNA into RNA using the four ribonucleoside triphosphates as substrates. Common core component of RNA polymerases I and III which synthesize ribosomal RNA precursors and small RNAs, such as 5S rRNA and tRNAs, respectively. This Danio rerio (Zebrafish) protein is DNA-directed RNA polymerases I and III subunit RPAC2 (polr1d).